The following is a 395-amino-acid chain: Cation channel sperm-associated protein 3 (395 aa).

Topologically, residues 1–48 (MSQHFHHNPVRVKSGSLFATASEALQARLSKIKRKDKECQAYFRKVIK) are cytoplasmic. The helical transmembrane segment at 49–71 (STFFQIVMITTVTTNSFLLVLGT) threads the bilayer. Residues 72–80 (NYDIQFEFF) are Extracellular-facing. A helical membrane pass occupies residues 81–107 (RTFEVSELFFVSVYVCEFLMKVYVDPI). T108 is a topological domain (cytoplasmic). Residues 109–131 (YWKDGYNILDVIILIILTIPYLL) traverse the membrane as a helical segment. The Extracellular portion of the chain corresponds to 132–143 (RKIKGNHSAYLH). A helical transmembrane segment spans residues 144-160 (FADGIQSLRILKLISYS). Over 161–168 (RGIRTLII) the chain is Cytoplasmic. A helical membrane pass occupies residues 169–195 (AVGETVYTVASVLTLLFLLMFVFAILG). At 196 to 216 (FCLFGVTDRGDLENWGNLASA) the chain is on the extracellular side. Residues 217 to 236 (FFTLFSLATVDGWTDLQEEL) constitute an intramembrane region (helical; Pore-forming). The Extracellular segment spans residues 237–242 (DKRKFT). A helical membrane pass occupies residues 243–268 (VSRAFTILFILLASFIFLNMFVGVMI). Topologically, residues 269 to 395 (MHTEDSMKKF…ESSSSLSGLS (127 aa)) are cytoplasmic.

The protein belongs to the cation channel sperm-associated (TC 1.A.1.19) family. As to quaternary structure, component of the CatSper complex or CatSpermasome composed of the core pore-forming members CATSPER1, CATSPER2, CATSPER3 and CATSPER4 as well as auxiliary members CATSPERB, CATSPERG2, CATSPERD, CATSPERE, CATSPERZ, C2CD6/CATSPERT, SLCO6C1, TMEM249, TMEM262 and EFCAB9. HSPA1 may be an additional auxiliary complex member. The core complex members CATSPER1, CATSPER2, CATSPER3 and CATSPER4 form a heterotetrameric channel. The auxiliary CATSPERB, CATSPERG2, CATSPERD and CATSPERE subunits form a pavilion-like structure over the pore which stabilizes the complex through interactions with CATSPER4, CATSPER3, CATSPER1 and CATSPER2 respectively. SLCO6C1 interacts with CATSPERE and TMEM262/CATSPERH interacts with CATSPERB, further stabilizing the complex. C2CD6/CATSPERT interacts at least with CATSPERD and is required for targeting the CatSper complex in the flagellar membrane. Testis-specific.

It is found in the cell projection. Its subcellular location is the cilium. The protein resides in the flagellum membrane. It catalyses the reaction Ca(2+)(in) = Ca(2+)(out). In contrast to the human ortholog, not activated by progesterone. Activated by intracellular alkalinization. Functionally, pore-forming subunit of the CatSper complex, a sperm-specific voltage-gated calcium channel that plays a central role in sperm cell hyperactivation. Controls calcium entry to mediate the hyperactivated motility, a step needed for sperm motility which is essential late in the preparation of sperm for fertilization. The protein is Cation channel sperm-associated protein 3 (Catsper3) of Mus musculus (Mouse).